We begin with the raw amino-acid sequence, 956 residues long: Thrombospondin-3 (956 aa).

The signal sequence occupies residues 1-21 (MEKPELWGVLALLLLCSYTCG). The 172-residue stretch at 22–193 (SQDLQVIDLL…VESMKIILGG (172 aa)) folds into the Laminin G-like domain. Disulfide bonds link Cys278–Cys289, Cys283–Cys300, Cys303–Cys314, Cys320–Cys332, Cys326–Cys341, Cys344–Cys368, Cys374–Cys388, Cys382–Cys397, Cys400–Cys412, Cys418–Cys432, Cys426–Cys442, Cys444–Cys455, Cys471–Cys478, Cys483–Cys503, Cys519–Cys539, Cys542–Cys562, Cys578–Cys598, Cys601–Cys621, Cys639–Cys659, Cys679–Cys699, and Cys715–Cys936. N-linked (GlcNAc...) asparagine glycosylation occurs at Asn310. The EGF-like 1; calcium-binding domain maps to 316–354 (DINECAHADPCFPGSSCINTMPGFHCEACPPGYKGTRVS). In terms of domain architecture, EGF-like 2; calcium-binding spans 370–410 (DIDECNDGNNGGCDPNSICTNTVGSFKCGPCRLGFLGNQSQ). A glycan (N-linked (GlcNAc...) asparagine) is linked at Asn407. The region spanning 414 to 456 (PARTCHSPAHSPCHIHAHCLFERNGAVSCQCNVGWAGNGNVCG) is the EGF-like 3 domain. TSP type-3 repeat units lie at residues 457 to 491 (PDTD…NSGQ), 492 to 527 (EDAD…NKDQ), 528 to 550 (QNSD…NNDQ), 551 to 586 (KDTD…NPLQ), 587 to 609 (TDRD…NPTQ), 610 to 647 (TDAD…NSSQ), 648 to 687 (LDSD…NPNQ), and 688 to 723 (KDSD…EVTL). 2 disordered regions span residues 518-537 (NCRL…SFGD) and 546-699 (PNND…GDVC). Positions 555 to 568 (GNGEGDACDNDVDG) are enriched in acidic residues. The span at 612-628 (ADSDLVGDVCDTNEDSD) shows a compositional bias: acidic residues. N-linked (GlcNAc...) asparagine glycosylation occurs at Asn644. A compositionally biased stretch (acidic residues) spans 650–667 (SDNDGLGDECDGDDDNDG). One can recognise a TSP C-terminal domain in the interval 727–941 (RAYQTVILDP…LQYRCNDTVP (215 aa)). An N-linked (GlcNAc...) asparagine glycan is attached at Asn937.

This sequence belongs to the thrombospondin family. Oligomer; disulfide-linked. In terms of tissue distribution, brain, lung and cartilage.

Its function is as follows. Adhesive glycoprotein that mediates cell-to-cell and cell-to-matrix interactions. Can bind to fibrinogen, fibronectin, laminin and type V collagen. This is Thrombospondin-3 (Thbs3) from Mus musculus (Mouse).